A 368-amino-acid chain; its full sequence is MTNPTKPIPLNFDKPRRFMPPKHFADLSADERIDALKELGLPKFRANQIARHYYGRLEADPSTMTDLPAAAREKVKDALFPQLMQPVRAVQADDGETQKTLWKLHDGTLLESVLMRYPNRATLCISSQAGCGMACPFCATGQGGLDRNLSTGEIVDQVRAASATMQAEGGRLSNIVFMGMGEPLANYKRVVSAVRQITAPVPEGFGISQRNVTVSTVGLAPAIRKLADEDLSVTLAVSLHTPDDELRNTLVPTNNRWEVAEVLDAARYYADRSGRRVSIEYALIRDVNDQGWRADMLGKKLHKALGPLVHVNLIPLNPTPGSKWDASPMDRQKEFVQRVIAQGVTCTVRDTRGQEIAAACGQLAAEER.

Catalysis depends on Glu111, which acts as the Proton acceptor. In terms of domain architecture, Radical SAM core spans 117–355 (YPNRATLCIS…CTVRDTRGQE (239 aa)). Residues Cys124 and Cys360 are joined by a disulfide bond. The [4Fe-4S] cluster site is built by Cys131, Cys135, and Cys138. Residues 181 to 182 (GE), Ser215, 238 to 240 (SLH), and Asn317 contribute to the S-adenosyl-L-methionine site. The active-site S-methylcysteine intermediate is Cys360.

This sequence belongs to the radical SAM superfamily. RlmN family. [4Fe-4S] cluster serves as cofactor.

It localises to the cytoplasm. The enzyme catalyses adenosine(2503) in 23S rRNA + 2 reduced [2Fe-2S]-[ferredoxin] + 2 S-adenosyl-L-methionine = 2-methyladenosine(2503) in 23S rRNA + 5'-deoxyadenosine + L-methionine + 2 oxidized [2Fe-2S]-[ferredoxin] + S-adenosyl-L-homocysteine. It catalyses the reaction adenosine(37) in tRNA + 2 reduced [2Fe-2S]-[ferredoxin] + 2 S-adenosyl-L-methionine = 2-methyladenosine(37) in tRNA + 5'-deoxyadenosine + L-methionine + 2 oxidized [2Fe-2S]-[ferredoxin] + S-adenosyl-L-homocysteine. Specifically methylates position 2 of adenine 2503 in 23S rRNA and position 2 of adenine 37 in tRNAs. The protein is Probable dual-specificity RNA methyltransferase RlmN of Corynebacterium diphtheriae (strain ATCC 700971 / NCTC 13129 / Biotype gravis).